A 657-amino-acid polypeptide reads, in one-letter code: Glycogen debranching enzyme (657 aa).

Residue Asp-336 is the Nucleophile of the active site. Glu-371 (proton donor) is an active-site residue. Residues 460–479 (ANGEENRDGTNNNYSNNHGK) form a disordered region.

The protein belongs to the glycosyl hydrolase 13 family.

It catalyses the reaction Hydrolysis of (1-&gt;6)-alpha-D-glucosidic linkages to branches with degrees of polymerization of three or four glucose residues in limit dextrin.. The protein operates within glycan degradation; glycogen degradation. Its function is as follows. Removes maltotriose and maltotetraose chains that are attached by 1,6-alpha-linkage to the limit dextrin main chain, generating a debranched limit dextrin. The protein is Glycogen debranching enzyme of Escherichia coli (strain UTI89 / UPEC).